Here is a 126-residue protein sequence, read N- to C-terminus: Histone H2B type 1-K (126 aa).

The segment covering Met1–Lys12 has biased composition (low complexity). Residues Met1–Glu36 are disordered. The residue at position 2 (Pro2) is an N-acetylproline. Residue Glu3 is modified to ADP-ribosyl glutamic acid. The residue at position 6 (Lys6) is an N6-(2-hydroxyisobutyryl)lysine; alternate. At Lys6 the chain carries N6-(beta-hydroxybutyryl)lysine; alternate. Lys6 carries the N6-acetyllysine; alternate modification. At Lys6 the chain carries N6-butyryllysine; alternate. An N6-crotonyllysine; alternate modification is found at Lys6. The residue at position 6 (Lys6) is an N6-lactoyllysine; alternate. A Glycyl lysine isopeptide (Lys-Gly) (interchain with G-Cter in SUMO2); alternate cross-link involves residue Lys6. Ser7 is modified (ADP-ribosylserine). Lys12 bears the N6-(beta-hydroxybutyryl)lysine; alternate mark. N6-acetyllysine; alternate is present on residues Lys12 and Lys13. Residues Lys12 and Lys13 each carry the N6-crotonyllysine; alternate modification. Residue Lys12 is modified to N6-lactoyllysine; alternate. Lys13 carries the post-translational modification N6-(2-hydroxyisobutyryl)lysine; alternate. Ser15 carries the phosphoserine; by STK4/MST1 modification. N6-acetyllysine; alternate occurs at positions 16, 17, 21, and 24. Lys16, Lys17, Lys21, Lys24, and Lys35 each carry N6-crotonyllysine; alternate. 4 positions are modified to N6-lactoyllysine; alternate: Lys16, Lys17, Lys21, and Lys24. Lys17 carries the N6-glutaryllysine; alternate modification. Lys21, Lys24, and Lys35 each carry N6-(2-hydroxyisobutyryl)lysine; alternate. The residue at position 21 (Lys21) is an N6-(beta-hydroxybutyryl)lysine; alternate. Lys21 is subject to N6-butyryllysine; alternate. Lys21 participates in a covalent cross-link: Glycyl lysine isopeptide (Lys-Gly) (interchain with G-Cter in SUMO2); alternate. An N6-(beta-hydroxybutyryl)lysine; alternate modification is found at Lys35. At Lys35 the chain carries N6-glutaryllysine; alternate. Residue Lys35 is modified to N6-succinyllysine; alternate. A Glycyl lysine isopeptide (Lys-Gly) (interchain with G-Cter in ubiquitin); alternate cross-link involves residue Lys35. PolyADP-ribosyl glutamic acid is present on Glu36. At Ser37 the chain carries Phosphoserine; by AMPK. 3 positions are modified to N6-(2-hydroxyisobutyryl)lysine; alternate: Lys44, Lys47, and Lys58. Lys44 carries the N6-lactoyllysine; alternate modification. An N6-glutaryllysine; alternate mark is found at Lys44 and Lys47. Lys47 is modified (N6-methyllysine; alternate). The residue at position 58 (Lys58) is an N6,N6-dimethyllysine; alternate. Arg80 is subject to Dimethylated arginine. At Lys86 the chain carries N6-(2-hydroxyisobutyryl)lysine; alternate. Lys86 carries the post-translational modification N6-acetyllysine; alternate. An N6-lactoyllysine; alternate modification is found at Lys86. An N6,N6,N6-trimethyllysine; alternate modification is found at Lys86. Omega-N-methylarginine occurs at positions 87 and 93. Lys109 is modified (N6-(2-hydroxyisobutyryl)lysine; alternate). Lys109 is subject to N6-lactoyllysine; alternate. Lys109 is subject to N6-glutaryllysine; alternate. Lys109 carries the N6-methyllysine; alternate modification. Ser113 carries an O-linked (GlcNAc) serine glycan. The residue at position 116 (Thr116) is a Phosphothreonine. Lys117 and Lys121 each carry N6-(2-hydroxyisobutyryl)lysine; alternate. Lys117 carries the post-translational modification N6-(beta-hydroxybutyryl)lysine; alternate. N6-lactoyllysine; alternate is present on residues Lys117 and Lys121. 2 positions are modified to N6-glutaryllysine; alternate: Lys117 and Lys121. Lys117 and Lys121 each carry N6-succinyllysine; alternate. Lys117 is modified (N6-methylated lysine; alternate). A Glycyl lysine isopeptide (Lys-Gly) (interchain with G-Cter in ubiquitin); alternate cross-link involves residue Lys121.

It belongs to the histone H2B family. The nucleosome is a histone octamer containing two molecules each of H2A, H2B, H3 and H4 assembled in one H3-H4 heterotetramer and two H2A-H2B heterodimers. The octamer wraps approximately 147 bp of DNA. Monoubiquitination at Lys-35 (H2BK34Ub) by the MSL1/MSL2 dimer is required for histone H3 'Lys-4' (H3K4me) and 'Lys-79' (H3K79me) methylation and transcription activation at specific gene loci, such as HOXA9 and MEIS1 loci. Similarly, monoubiquitination at Lys-121 (H2BK120Ub) by the RNF20/40 complex gives a specific tag for epigenetic transcriptional activation and is also prerequisite for histone H3 'Lys-4' and 'Lys-79' methylation. It also functions cooperatively with the FACT dimer to stimulate elongation by RNA polymerase II. H2BK120Ub also acts as a regulator of mRNA splicing: deubiquitination by USP49 is required for efficient cotranscriptional splicing of a large set of exons. Post-translationally, phosphorylated on Ser-15 (H2BS14ph) by STK4/MST1 during apoptosis; which facilitates apoptotic chromatin condensation. Also phosphorylated on Ser-15 in response to DNA double strand breaks (DSBs), and in correlation with somatic hypermutation and immunoglobulin class-switch recombination. Phosphorylation at Ser-37 (H2BS36ph) by AMPK in response to stress promotes transcription. In terms of processing, glcNAcylation at Ser-113 promotes monoubiquitination of Lys-121. It fluctuates in response to extracellular glucose, and associates with transcribed genes. ADP-ribosylated by PARP1 or PARP2 on Ser-7 (H2BS6ADPr) in response to DNA damage. H2BS6ADPr promotes recruitment of CHD1L. Mono-ADP-ribosylated on Glu-3 (H2BE2ADPr) by PARP3 in response to single-strand breaks. Poly ADP-ribosylation on Glu-36 (H2BE35ADPr) by PARP1 regulates adipogenesis: it inhibits phosphorylation at Ser-37 (H2BS36ph), thereby blocking expression of pro-adipogenetic genes. Post-translationally, crotonylation (Kcr) is specifically present in male germ cells and marks testis-specific genes in post-meiotic cells, including X-linked genes that escape sex chromosome inactivation in haploid cells. Crotonylation marks active promoters and enhancers and confers resistance to transcriptional repressors. It is also associated with post-meiotically activated genes on autosomes. In terms of processing, lactylated in macrophages by EP300/P300 by using lactoyl-CoA directly derived from endogenous or exogenous lactate, leading to stimulates gene transcription.

The protein localises to the nucleus. It localises to the chromosome. In terms of biological role, core component of nucleosome. Nucleosomes wrap and compact DNA into chromatin, limiting DNA accessibility to the cellular machineries which require DNA as a template. Histones thereby play a central role in transcription regulation, DNA repair, DNA replication and chromosomal stability. DNA accessibility is regulated via a complex set of post-translational modifications of histones, also called histone code, and nucleosome remodeling. The sequence is that of Histone H2B type 1-K from Bos taurus (Bovine).